We begin with the raw amino-acid sequence, 292 residues long: Elongation factor Ts (292 aa).

An involved in Mg(2+) ion dislocation from EF-Tu region spans residues 80–83 (TDFV).

Belongs to the EF-Ts family.

Its subcellular location is the cytoplasm. Associates with the EF-Tu.GDP complex and induces the exchange of GDP to GTP. It remains bound to the aminoacyl-tRNA.EF-Tu.GTP complex up to the GTP hydrolysis stage on the ribosome. The sequence is that of Elongation factor Ts from Cupriavidus taiwanensis (strain DSM 17343 / BCRC 17206 / CCUG 44338 / CIP 107171 / LMG 19424 / R1) (Ralstonia taiwanensis (strain LMG 19424)).